The primary structure comprises 200 residues: Diadenylate cyclase (200 aa).

The helical transmembrane segment at 5 to 25 (ILLFITLIFLLLLFVFLIAFA) threads the bilayer. One can recognise a DAC domain in the interval 28-185 (NKRVRNYVVR…KGVIKTLSSN (158 aa)).

This sequence belongs to the adenylate cyclase family. DacB/CdaS subfamily. As to quaternary structure, probably oligomerizes.

Its subcellular location is the cell membrane. It catalyses the reaction 2 ATP = 3',3'-c-di-AMP + 2 diphosphate. In terms of biological role, catalyzes the condensation of 2 ATP molecules into cyclic di-AMP (c-di-AMP), a second messenger used to regulate differing processes in different bacteria. This chain is Diadenylate cyclase, found in Mycoplasma genitalium (strain ATCC 33530 / DSM 19775 / NCTC 10195 / G37) (Mycoplasmoides genitalium).